The following is a 91-amino-acid chain: Small ribosomal subunit protein eS24 (91 aa).

The segment at 51 to 91 is disordered; sequence QRRKDAAAHKEAYNAMPEAERRHLNSEKYANRKAEVSYKHR.

This sequence belongs to the eukaryotic ribosomal protein eS24 family.

This chain is Small ribosomal subunit protein eS24, found in Caenorhabditis elegans.